The following is a 493-amino-acid chain: Glycerol kinase (493 aa).

Threonine 13 serves as a coordination point for ADP. Residues threonine 13, threonine 14, and serine 15 each contribute to the ATP site. A sn-glycerol 3-phosphate-binding site is contributed by threonine 13. Arginine 17 serves as a coordination point for ADP. Sn-glycerol 3-phosphate-binding residues include arginine 83, glutamate 84, tyrosine 135, and aspartate 244. Glycerol is bound by residues arginine 83, glutamate 84, tyrosine 135, aspartate 244, and glutamine 245. The ADP site is built by threonine 266 and glycine 309. The ATP site is built by threonine 266, glycine 309, glutamine 313, and glycine 410. ADP contacts are provided by glycine 410 and asparagine 414.

It belongs to the FGGY kinase family.

The catalysed reaction is glycerol + ATP = sn-glycerol 3-phosphate + ADP + H(+). Its pathway is polyol metabolism; glycerol degradation via glycerol kinase pathway; sn-glycerol 3-phosphate from glycerol: step 1/1. Inhibited by fructose 1,6-bisphosphate (FBP). In terms of biological role, key enzyme in the regulation of glycerol uptake and metabolism. Catalyzes the phosphorylation of glycerol to yield sn-glycerol 3-phosphate. The polypeptide is Glycerol kinase (Shewanella halifaxensis (strain HAW-EB4)).